We begin with the raw amino-acid sequence, 780 residues long: ATP-dependent 6-phosphofructokinase, muscle type (780 aa).

Threonine 2 is modified (N-acetylthreonine). The interval threonine 2 to histidine 390 is N-terminal catalytic PFK domain 1. ATP contacts are provided by residues glycine 25, arginine 88 to cysteine 89, and glycine 118 to serine 121. Aspartate 119 is a Mg(2+) binding site. A Phosphoserine modification is found at serine 133. Substrate-binding positions include serine 164–aspartate 166, arginine 201, methionine 208–arginine 210, glutamate 264, arginine 292, and histidine 298–arginine 301. Residue aspartate 166 is the Proton acceptor of the active site. Serine 377 is modified (phosphoserine). The interdomain linker stretch occupies residues valine 391–histidine 401. The C-terminal regulatory PFK domain 2 stretch occupies residues threonine 402–valine 780. Residues arginine 471 and threonine 528–asparagine 532 each bind beta-D-fructose 2,6-bisphosphate. A glycan (O-linked (GlcNAc) serine) is linked at serine 530. An N6-(2-hydroxyisobutyryl)lysine modification is found at lysine 557. Beta-D-fructose 2,6-bisphosphate-binding positions include arginine 566, methionine 573–glycine 575, glutamate 629, arginine 655, and histidine 661–glutamine 664. Serine 667 is subject to Phosphoserine. Arginine 735 lines the beta-D-fructose 2,6-bisphosphate pocket. Residue serine 775 is modified to Phosphoserine.

Belongs to the phosphofructokinase type A (PFKA) family. ATP-dependent PFK group I subfamily. Eukaryotic two domain clade 'E' sub-subfamily. Homo- and heterotetramers. Phosphofructokinase (PFK) enzyme functions as a tetramer composed of different combinations of 3 types of subunits, called PFKM (M), PFKL (L) and PFKP (P). The composition of the PFK tetramer differs according to the tissue type it is present in. The kinetic and regulatory properties of the tetrameric enzyme are dependent on the subunit composition, hence can vary across tissues. Isoform 2 and isoform 3 interact (via N-terminal testis-specific region) with GSTM5. Isoform 2 and isoform 3 interact (via C-terminus) with HK1 (via N-terminal spermatogenic cell-specific region). Mg(2+) serves as cofactor. GlcNAcylation decreases enzyme activity. In terms of tissue distribution, isoform 1 is expressed in skeletal muscle (at protein level). Isoform 2 and isoform 3 are testis-specific and are detected in quiescent sperm (at protein level). They are first detected in the cytoplasm of round spermatids and subsequently in the flagellum of elongated spermatids extending into the seminiferous tubule lumen (at protein level). Isoform 2 is expressed at higher level than isoform 3 in testis.

It is found in the cytoplasm. It localises to the cell projection. The protein resides in the cilium. The protein localises to the flagellum. It carries out the reaction beta-D-fructose 6-phosphate + ATP = beta-D-fructose 1,6-bisphosphate + ADP + H(+). It functions in the pathway carbohydrate degradation; glycolysis; D-glyceraldehyde 3-phosphate and glycerone phosphate from D-glucose: step 3/4. Allosterically activated by ADP, AMP, or fructose 2,6-bisphosphate, and allosterically inhibited by ATP or citrate. In terms of biological role, catalyzes the phosphorylation of D-fructose 6-phosphate to fructose 1,6-bisphosphate by ATP, the first committing step of glycolysis. This Mus musculus (Mouse) protein is ATP-dependent 6-phosphofructokinase, muscle type (Pfkm).